Reading from the N-terminus, the 67-residue chain is Protein SlyX homolog (67 aa).

It belongs to the SlyX family.

The chain is Protein SlyX homolog from Mesorhizobium japonicum (strain LMG 29417 / CECT 9101 / MAFF 303099) (Mesorhizobium loti (strain MAFF 303099)).